Reading from the N-terminus, the 81-residue chain is ATP synthase subunit c (81 aa).

Helical transmembrane passes span 4–24 and 57–77; these read MIAQ…AIGA and VGLV…FVFA.

Belongs to the ATPase C chain family. F-type ATPases have 2 components, F(1) - the catalytic core - and F(0) - the membrane proton channel. F(1) has five subunits: alpha(3), beta(3), gamma(1), delta(1), epsilon(1). F(0) has three main subunits: a(1), b(2) and c(10-14). The alpha and beta chains form an alternating ring which encloses part of the gamma chain. F(1) is attached to F(0) by a central stalk formed by the gamma and epsilon chains, while a peripheral stalk is formed by the delta and b chains.

The protein resides in the cell membrane. In terms of biological role, f(1)F(0) ATP synthase produces ATP from ADP in the presence of a proton or sodium gradient. F-type ATPases consist of two structural domains, F(1) containing the extramembraneous catalytic core and F(0) containing the membrane proton channel, linked together by a central stalk and a peripheral stalk. During catalysis, ATP synthesis in the catalytic domain of F(1) is coupled via a rotary mechanism of the central stalk subunits to proton translocation. Its function is as follows. Key component of the F(0) channel; it plays a direct role in translocation across the membrane. A homomeric c-ring of between 10-14 subunits forms the central stalk rotor element with the F(1) delta and epsilon subunits. This Mycobacterium leprae (strain TN) protein is ATP synthase subunit c.